The following is a 270-amino-acid chain: MTVLKEQPPRLLRGTPLASKGLRKTFGQREVLKGIDLHIPAGQFVAIVGRSGCGKSTLLRLLAGLDQPTAGQLLAGAAPLEEAREETRLMFQDARLLPWKKVIDNVGLGLSGDWRPRALEALDAVGLADRANEWPAALSGGQKQRVALARALIHQPRLLLLDEPLGALDALTRIEMQQLIERLWRQHGFTVLLVTHDVSEAVAVADRVILIEDGEVGLDLTVDLARPRARGSHRLAALESEVLNRVLSTPGTAPEPDPVAPLPTQLRWAH.

The 222-residue stretch at 17-238 folds into the ABC transporter domain; the sequence is LASKGLRKTF…ARGSHRLAAL (222 aa). Residue 49–56 participates in ATP binding; it reads GRSGCGKS. Residues 248–270 are disordered; sequence STPGTAPEPDPVAPLPTQLRWAH.

It belongs to the ABC transporter superfamily. Aliphatic sulfonates importer (TC 3.A.1.17.2) family. As to quaternary structure, the complex is composed of two ATP-binding proteins (SsuB), two transmembrane proteins (SsuC) and a solute-binding protein (SsuA).

The protein localises to the cell inner membrane. The catalysed reaction is ATP + H2O + aliphatic sulfonate-[sulfonate-binding protein]Side 1 = ADP + phosphate + aliphatic sulfonateSide 2 + [sulfonate-binding protein]Side 1.. Part of the ABC transporter complex SsuABC involved in aliphatic sulfonates import. Responsible for energy coupling to the transport system. This Pseudomonas putida (strain ATCC 47054 / DSM 6125 / CFBP 8728 / NCIMB 11950 / KT2440) protein is Aliphatic sulfonates import ATP-binding protein SsuB.